The following is a 487-amino-acid chain: Glycogen synthase 1 (487 aa).

An ADP-alpha-D-glucose-binding site is contributed by Lys15.

It belongs to the glycosyltransferase 1 family. Bacterial/plant glycogen synthase subfamily.

It carries out the reaction [(1-&gt;4)-alpha-D-glucosyl](n) + ADP-alpha-D-glucose = [(1-&gt;4)-alpha-D-glucosyl](n+1) + ADP + H(+). Its pathway is glycan biosynthesis; glycogen biosynthesis. Synthesizes alpha-1,4-glucan chains using ADP-glucose. This chain is Glycogen synthase 1, found in Nitrosococcus oceani (strain ATCC 19707 / BCRC 17464 / JCM 30415 / NCIMB 11848 / C-107).